The chain runs to 360 residues: MLVYLAEYLTQFYSGFNVFSYVTFRAILGLLTALVFSLWWGPILIKHLQTLQIGQVVRDDGPESHFSKRGTPTMGGILILAGIFISVLLWGDLSNRYVLVTLFVLASFGVIGFIDDYRKVVKKDSKGLIARWKYALQSIAALVVAVYLYSSSTMVGETQLVVPFFKDIMPQLGFMFILLAYFTIVGASNAVNLTDGLDGLAIMPTVMVAAAFALIAYLSGHAQFASYLHLPHLPLAGELVIVCTAMVGAGLGFLWFNTYPAQVFMGDVGSLALGAALGVIAILVRQEILLVIMGGVFVMETVSVILQVGSYKLRGQRIFRMAPIHHHYELKGWPEPRVIVRFWIISLFLVLLGLATLKLR.

Helical transmembrane passes span 26-46 (AILG…ILIK), 73-93 (TMGG…WGDL), 97-117 (YVLV…IDDY), 135-155 (ALQS…STMV), 168-188 (IMPQ…VGAS), 199-219 (GLAI…AYLS), 236-256 (AGEL…FLWF), 263-283 (VFMG…IAIL), 288-308 (ILLV…ILQV), and 338-358 (VIVR…ATLK).

The protein belongs to the glycosyltransferase 4 family. MraY subfamily. Requires Mg(2+) as cofactor.

The protein localises to the cell inner membrane. The catalysed reaction is UDP-N-acetyl-alpha-D-muramoyl-L-alanyl-gamma-D-glutamyl-meso-2,6-diaminopimeloyl-D-alanyl-D-alanine + di-trans,octa-cis-undecaprenyl phosphate = di-trans,octa-cis-undecaprenyl diphospho-N-acetyl-alpha-D-muramoyl-L-alanyl-D-glutamyl-meso-2,6-diaminopimeloyl-D-alanyl-D-alanine + UMP. The protein operates within cell wall biogenesis; peptidoglycan biosynthesis. Functionally, catalyzes the initial step of the lipid cycle reactions in the biosynthesis of the cell wall peptidoglycan: transfers peptidoglycan precursor phospho-MurNAc-pentapeptide from UDP-MurNAc-pentapeptide onto the lipid carrier undecaprenyl phosphate, yielding undecaprenyl-pyrophosphoryl-MurNAc-pentapeptide, known as lipid I. This chain is Phospho-N-acetylmuramoyl-pentapeptide-transferase, found in Shewanella frigidimarina (strain NCIMB 400).